A 707-amino-acid chain; its full sequence is Polyribonucleotide nucleotidyltransferase (707 aa).

Residues Asp-486 and Asp-492 each contribute to the Mg(2+) site. In terms of domain architecture, KH spans 553 to 612 (PTVTTLRVLPDKIPIIIGPAGKNIKKIIEETKVKIDLDPEGLVKIYATSKEAAEKAVSMI). Residues 622 to 690 (GEVYMGKVTR…DQGRIKVSLK (69 aa)) enclose the S1 motif domain.

This sequence belongs to the polyribonucleotide nucleotidyltransferase family. It depends on Mg(2+) as a cofactor.

The protein localises to the cytoplasm. It catalyses the reaction RNA(n+1) + phosphate = RNA(n) + a ribonucleoside 5'-diphosphate. In terms of biological role, involved in mRNA degradation. Catalyzes the phosphorolysis of single-stranded polyribonucleotides processively in the 3'- to 5'-direction. The protein is Polyribonucleotide nucleotidyltransferase of Sulfurihydrogenibium azorense (strain DSM 15241 / OCM 825 / Az-Fu1).